Consider the following 410-residue polypeptide: Alanine racemase (410 aa).

In terms of domain architecture, RPE1 insert spans 28-76 (VDFLHNVANKEEFAGNTSPRTAAYTLVREDASLGSTPKLPLGASYAKNL). The active-site Proton acceptor; specific for D-alanine is the K83. N6-(pyridoxal phosphate)lysine is present on K83. Residue R182 participates in substrate binding. Catalysis depends on Y305, which acts as the Proton acceptor; specific for L-alanine. M353 lines the substrate pocket.

It belongs to the alanine racemase family. Pyridoxal 5'-phosphate is required as a cofactor.

It catalyses the reaction L-alanine = D-alanine. It participates in amino-acid biosynthesis; D-alanine biosynthesis; D-alanine from L-alanine: step 1/1. Catalyzes the interconversion of L-alanine and D-alanine. May also act on other amino acids. The chain is Alanine racemase (alr) from Rickettsia bellii (strain RML369-C).